The sequence spans 378 residues: Queuine tRNA-ribosyltransferase (378 aa).

Asp93 acts as the Proton acceptor in catalysis. Residues 93–97 (DSGGF), Asp147, Gln189, and Gly216 each bind substrate. The segment at 247–253 (GVGTFRE) is RNA binding. Asp266 serves as the catalytic Nucleophile. The interval 271–275 (TRVAR) is RNA binding; important for wobble base 34 recognition. Residues Cys308, Cys310, Cys313, and His339 each contribute to the Zn(2+) site.

The protein belongs to the queuine tRNA-ribosyltransferase family. In terms of assembly, homodimer. Within each dimer, one monomer is responsible for RNA recognition and catalysis, while the other monomer binds to the replacement base PreQ1. It depends on Zn(2+) as a cofactor.

The enzyme catalyses 7-aminomethyl-7-carbaguanine + guanosine(34) in tRNA = 7-aminomethyl-7-carbaguanosine(34) in tRNA + guanine. The protein operates within tRNA modification; tRNA-queuosine biosynthesis. In terms of biological role, catalyzes the base-exchange of a guanine (G) residue with the queuine precursor 7-aminomethyl-7-deazaguanine (PreQ1) at position 34 (anticodon wobble position) in tRNAs with GU(N) anticodons (tRNA-Asp, -Asn, -His and -Tyr). Catalysis occurs through a double-displacement mechanism. The nucleophile active site attacks the C1' of nucleotide 34 to detach the guanine base from the RNA, forming a covalent enzyme-RNA intermediate. The proton acceptor active site deprotonates the incoming PreQ1, allowing a nucleophilic attack on the C1' of the ribose to form the product. After dissociation, two additional enzymatic reactions on the tRNA convert PreQ1 to queuine (Q), resulting in the hypermodified nucleoside queuosine (7-(((4,5-cis-dihydroxy-2-cyclopenten-1-yl)amino)methyl)-7-deazaguanosine). This Gloeobacter violaceus (strain ATCC 29082 / PCC 7421) protein is Queuine tRNA-ribosyltransferase.